The chain runs to 337 residues: DNA-directed RNA polymerase subunit alpha (337 aa).

The segment at 1–233 (MVREEVTIST…NLFIPFLHAE (233 aa)) is alpha N-terminal domain (alpha-NTD). The segment at 266-337 (GIALKCIFID…FAMNLPKDFF (72 aa)) is alpha C-terminal domain (alpha-CTD).

It belongs to the RNA polymerase alpha chain family. In plastids the minimal PEP RNA polymerase catalytic core is composed of four subunits: alpha, beta, beta', and beta''. When a (nuclear-encoded) sigma factor is associated with the core the holoenzyme is formed, which can initiate transcription.

It localises to the plastid. The protein localises to the chloroplast. The catalysed reaction is RNA(n) + a ribonucleoside 5'-triphosphate = RNA(n+1) + diphosphate. Functionally, DNA-dependent RNA polymerase catalyzes the transcription of DNA into RNA using the four ribonucleoside triphosphates as substrates. The protein is DNA-directed RNA polymerase subunit alpha of Ceratophyllum demersum (Rigid hornwort).